The chain runs to 110 residues: DNA-binding protein Tneu_1679 (110 aa).

Belongs to the PDCD5 family.

The polypeptide is DNA-binding protein Tneu_1679 (Pyrobaculum neutrophilum (strain DSM 2338 / JCM 9278 / NBRC 100436 / V24Sta) (Thermoproteus neutrophilus)).